Reading from the N-terminus, the 55-residue chain is Ferredoxin (55 aa).

4Fe-4S ferredoxin-type domains are found at residues 2 to 27 and 28 to 55; these read YFITDACISCGACESECPVSPISPGD and SVYVIDADACIECGACANVCPVDAPQQK. [4Fe-4S] cluster is bound by residues C8, C11, C14, C18, C37, C40, C43, and C47.

[4Fe-4S] cluster serves as cofactor.

In terms of biological role, ferredoxins are iron-sulfur proteins that transfer electrons in a wide variety of metabolic reactions. The chain is Ferredoxin from Acetivibrio thermocellus (Hungateiclostridium thermocellum).